Reading from the N-terminus, the 278-residue chain is Secreted RxLR effector protein 151 (278 aa).

The first 18 residues, 1-18 (MRNRAVLFGLFFIGYSSC), serve as a signal peptide directing secretion. The short motif at 49–64 (RLLQVDGPKRILAEER) is the RxLR-dEER element.

It belongs to the RxLR effector family.

It localises to the secreted. It is found in the host endoplasmic reticulum membrane. Secreted effector that completely suppresses the host cell death induced by cell death-inducing proteins. The sequence is that of Secreted RxLR effector protein 151 from Plasmopara viticola (Downy mildew of grapevine).